The primary structure comprises 341 residues: 4-hydroxythreonine-4-phosphate dehydrogenase (341 aa).

Substrate is bound at residue T126. 3 residues coordinate a divalent metal cation: H161, H206, and H272. K280, N289, and R298 together coordinate substrate.

Belongs to the PdxA family. Homodimer. The cofactor is a divalent metal cation.

It is found in the cytoplasm. The catalysed reaction is 4-(phosphooxy)-L-threonine + NAD(+) = 3-amino-2-oxopropyl phosphate + CO2 + NADH. It participates in cofactor biosynthesis; pyridoxine 5'-phosphate biosynthesis; pyridoxine 5'-phosphate from D-erythrose 4-phosphate: step 4/5. Catalyzes the NAD(P)-dependent oxidation of 4-(phosphooxy)-L-threonine (HTP) into 2-amino-3-oxo-4-(phosphooxy)butyric acid which spontaneously decarboxylates to form 3-amino-2-oxopropyl phosphate (AHAP). This Thermosynechococcus vestitus (strain NIES-2133 / IAM M-273 / BP-1) protein is 4-hydroxythreonine-4-phosphate dehydrogenase.